Consider the following 288-residue polypeptide: Cell division protein ZipA (288 aa).

A topological domain (periplasmic) is located at residue methionine 1. The chain crosses the membrane as a helical span at residues 2-22 (EIGLREWLIVIGIIVIAGILF). Topologically, residues 23 to 288 (DGWRRMRGGK…FERRALTQKR (266 aa)) are cytoplasmic. Composition is skewed to basic and acidic residues over residues 66 to 75 (KEPQLDEHDL) and 83 to 93 (REAREPRESGS). Residues 66 to 141 (KEPQLDEHDL…AKSSPAVADK (76 aa)) form a disordered region. The span at 106-117 (GDLNLDLDLDGG) shows a compositional bias: low complexity.

The protein belongs to the ZipA family. Interacts with FtsZ via their C-terminal domains.

It is found in the cell inner membrane. Essential cell division protein that stabilizes the FtsZ protofilaments by cross-linking them and that serves as a cytoplasmic membrane anchor for the Z ring. Also required for the recruitment to the septal ring of downstream cell division proteins. The chain is Cell division protein ZipA from Pseudomonas fluorescens (strain Pf0-1).